A 227-amino-acid polypeptide reads, in one-letter code: Isopentenyl-diphosphate Delta-isomerase 1 (227 aa).

Substrate is bound at residue lysine 36. Mg(2+) is bound by residues histidine 40 and histidine 51. Positions 49 to 199 constitute a Nudix hydrolase domain; it reads LLHRAFSVFL…EIKLTPWFKI (151 aa). Substrate is bound by residues arginine 70 and lysine 74. Residue cysteine 86 is part of the active site. Serine 87 serves as a coordination point for substrate. The Mg(2+) site is built by glutamate 146 and glutamate 148. The active site involves glutamate 148. Lysine 176 carries the post-translational modification N6-acetyllysine. The Microbody targeting signal signature appears at 225 to 227; the sequence is HRL.

Belongs to the IPP isomerase type 1 family. As to quaternary structure, monomer. Requires Mg(2+) as cofactor.

It localises to the peroxisome. The catalysed reaction is isopentenyl diphosphate = dimethylallyl diphosphate. Its pathway is isoprenoid biosynthesis; dimethylallyl diphosphate biosynthesis; dimethylallyl diphosphate from isopentenyl diphosphate: step 1/1. Catalyzes the 1,3-allylic rearrangement of the homoallylic substrate isopentenyl (IPP) to its highly electrophilic allylic isomer, dimethylallyl diphosphate (DMAPP). This Mus musculus (Mouse) protein is Isopentenyl-diphosphate Delta-isomerase 1 (Idi1).